The primary structure comprises 85 residues: RNA-binding protein Hfq (85 aa).

A Sm domain is found at Asp10–Leu70.

This sequence belongs to the Hfq family. Homohexamer.

In terms of biological role, RNA chaperone that binds small regulatory RNA (sRNAs) and mRNAs to facilitate mRNA translational regulation in response to envelope stress, environmental stress and changes in metabolite concentrations. Also binds with high specificity to tRNAs. This chain is RNA-binding protein Hfq, found in Clostridium botulinum (strain 657 / Type Ba4).